The sequence spans 453 residues: Alpha-galacturonidase (453 aa).

NAD(+) is bound at residue 11–72 (IKIAYIGGGS…SQWEYKSVDS (62 aa)). Position 151 (Asn151) interacts with substrate. Cys173 is a Mn(2+) binding site. His174 (proton donor) is an active-site residue. Position 209 (His209) interacts with Mn(2+).

This sequence belongs to the glycosyl hydrolase 4 family. Homotetramer. It depends on NAD(+) as a cofactor. Requires Mn(2+) as cofactor.

It catalyses the reaction [(1-&gt;4)-alpha-D-galacturonosyl](n) + H2O = alpha-D-galacturonate + [(1-&gt;4)-alpha-D-galacturonosyl](n-1). Its function is as follows. Alpha-galacturonidase able to catalyze the hydrolysis of the chromogenic substrate p-nitrophenyl-alpha-D-galacturonic acid (pNPalphaGalUA). It is probable that alpha-1,4-di-galacturonate (GalUA(2)) is the naturally occurring substrate. This is Alpha-galacturonidase from Thermoanaerobacter italicus (strain DSM 9252 / Ab9).